A 110-amino-acid polypeptide reads, in one-letter code: uncharacterized protein (110 aa).

It to M.jannaschii MJ1213 and A.aeolicus AA15.

This is an uncharacterized protein from Methanocaldococcus jannaschii (strain ATCC 43067 / DSM 2661 / JAL-1 / JCM 10045 / NBRC 100440) (Methanococcus jannaschii).